Consider the following 620-residue polypeptide: Chaperone protein HscA homolog (620 aa).

Belongs to the heat shock protein 70 family.

Its function is as follows. Chaperone involved in the maturation of iron-sulfur cluster-containing proteins. Has a low intrinsic ATPase activity which is markedly stimulated by HscB. The sequence is that of Chaperone protein HscA homolog from Shewanella piezotolerans (strain WP3 / JCM 13877).